A 361-amino-acid polypeptide reads, in one-letter code: UDP-N-acetylglucosamine--N-acetylmuramyl-(pentapeptide) pyrophosphoryl-undecaprenol N-acetylglucosamine transferase (361 aa).

UDP-N-acetyl-alpha-D-glucosamine is bound by residues 11 to 13 (TGG), Asn-124, Arg-164, Ser-192, and Gln-295.

The protein belongs to the glycosyltransferase 28 family. MurG subfamily.

It is found in the cell membrane. It catalyses the reaction di-trans,octa-cis-undecaprenyl diphospho-N-acetyl-alpha-D-muramoyl-L-alanyl-D-glutamyl-meso-2,6-diaminopimeloyl-D-alanyl-D-alanine + UDP-N-acetyl-alpha-D-glucosamine = di-trans,octa-cis-undecaprenyl diphospho-[N-acetyl-alpha-D-glucosaminyl-(1-&gt;4)]-N-acetyl-alpha-D-muramoyl-L-alanyl-D-glutamyl-meso-2,6-diaminopimeloyl-D-alanyl-D-alanine + UDP + H(+). Its pathway is cell wall biogenesis; peptidoglycan biosynthesis. In terms of biological role, cell wall formation. Catalyzes the transfer of a GlcNAc subunit on undecaprenyl-pyrophosphoryl-MurNAc-pentapeptide (lipid intermediate I) to form undecaprenyl-pyrophosphoryl-MurNAc-(pentapeptide)GlcNAc (lipid intermediate II). This is UDP-N-acetylglucosamine--N-acetylmuramyl-(pentapeptide) pyrophosphoryl-undecaprenol N-acetylglucosamine transferase from Deinococcus geothermalis (strain DSM 11300 / CIP 105573 / AG-3a).